The sequence spans 110 residues: NADH-quinone oxidoreductase subunit K (110 aa).

The next 3 helical transmembrane spans lie at Leu-13–Met-33, Ile-41–Val-61, and Ile-73–Tyr-93.

Belongs to the complex I subunit 4L family. As to quaternary structure, NDH-1 is composed of 14 different subunits. Subunits NuoA, H, J, K, L, M, N constitute the membrane sector of the complex.

The protein localises to the cell inner membrane. The enzyme catalyses a quinone + NADH + 5 H(+)(in) = a quinol + NAD(+) + 4 H(+)(out). Functionally, NDH-1 shuttles electrons from NADH, via FMN and iron-sulfur (Fe-S) centers, to quinones in the respiratory chain. The immediate electron acceptor for the enzyme in this species is believed to be ubiquinone. Couples the redox reaction to proton translocation (for every two electrons transferred, four hydrogen ions are translocated across the cytoplasmic membrane), and thus conserves the redox energy in a proton gradient. This is NADH-quinone oxidoreductase subunit K from Rickettsia prowazekii (strain Madrid E).